The following is a 380-amino-acid chain: Putative zinc finger protein C02F5.12 (380 aa).

Positions 137-187 (NLDIPGTSSDIPSDPSSALKVPKKEVLDESEEILDQTSGSSSFSLNDSEQA) are disordered. Composition is skewed to polar residues over residues 142–152 (GTSSDIPSDPS) and 171–187 (DQTS…SEQA). Residues 271–294 (IPCKLCGFECTNVRRMRSHYAKAH) form a C2H2-type zinc finger.

It localises to the nucleus. This chain is Putative zinc finger protein C02F5.12, found in Caenorhabditis elegans.